The following is a 261-amino-acid chain: tRNA pseudouridine synthase A (261 aa).

The Nucleophile role is filled by Asp-51. Tyr-109 contacts substrate.

Belongs to the tRNA pseudouridine synthase TruA family. Homodimer.

It catalyses the reaction uridine(38/39/40) in tRNA = pseudouridine(38/39/40) in tRNA. Formation of pseudouridine at positions 38, 39 and 40 in the anticodon stem and loop of transfer RNAs. The chain is tRNA pseudouridine synthase A from Psychromonas ingrahamii (strain DSM 17664 / CCUG 51855 / 37).